Consider the following 278-residue polypeptide: NAD kinase (278 aa).

D56 (proton acceptor) is an active-site residue. NAD(+) contacts are provided by residues 56-57 (DG), 132-133 (NE), R158, D160, and 171-176 (TAYNKS).

Belongs to the NAD kinase family. Requires a divalent metal cation as cofactor.

It is found in the cytoplasm. The enzyme catalyses NAD(+) + ATP = ADP + NADP(+) + H(+). In terms of biological role, involved in the regulation of the intracellular balance of NAD and NADP, and is a key enzyme in the biosynthesis of NADP. Catalyzes specifically the phosphorylation on 2'-hydroxyl of the adenosine moiety of NAD to yield NADP. This is NAD kinase from Streptococcus agalactiae serotype V (strain ATCC BAA-611 / 2603 V/R).